Reading from the N-terminus, the 400-residue chain is NADH-quinone oxidoreductase subunit D (400 aa).

This sequence belongs to the complex I 49 kDa subunit family. NDH-1 is composed of 14 different subunits. Subunits NuoB, C, D, E, F, and G constitute the peripheral sector of the complex.

The protein resides in the cell inner membrane. The enzyme catalyses a quinone + NADH + 5 H(+)(in) = a quinol + NAD(+) + 4 H(+)(out). Functionally, NDH-1 shuttles electrons from NADH, via FMN and iron-sulfur (Fe-S) centers, to quinones in the respiratory chain. The immediate electron acceptor for the enzyme in this species is believed to be a menaquinone. Couples the redox reaction to proton translocation (for every two electrons transferred, four hydrogen ions are translocated across the cytoplasmic membrane), and thus conserves the redox energy in a proton gradient. The chain is NADH-quinone oxidoreductase subunit D from Chlorobium chlorochromatii (strain CaD3).